Here is a 513-residue protein sequence, read N- to C-terminus: ATP synthase subunit alpha (513 aa).

Residue 169 to 176 (GDRQTGKT) participates in ATP binding.

This sequence belongs to the ATPase alpha/beta chains family. F-type ATPases have 2 components, CF(1) - the catalytic core - and CF(0) - the membrane proton channel. CF(1) has five subunits: alpha(3), beta(3), gamma(1), delta(1), epsilon(1). CF(0) has three main subunits: a(1), b(2) and c(9-12). The alpha and beta chains form an alternating ring which encloses part of the gamma chain. CF(1) is attached to CF(0) by a central stalk formed by the gamma and epsilon chains, while a peripheral stalk is formed by the delta and b chains.

It is found in the cell inner membrane. The catalysed reaction is ATP + H2O + 4 H(+)(in) = ADP + phosphate + 5 H(+)(out). In terms of biological role, produces ATP from ADP in the presence of a proton gradient across the membrane. The alpha chain is a regulatory subunit. The sequence is that of ATP synthase subunit alpha from Klebsiella pneumoniae (strain 342).